Here is a 229-residue protein sequence, read N- to C-terminus: Potassium/proton antiporter CemA (229 aa).

The next 3 membrane-spanning stretches (helical) occupy residues 7-27 (FTPLLYLVSIVFLPWWISLLF), 107-127 (ILHFSTNIICFIILSGYSILG), and 189-209 (IISGLVSTFPVILDTILKYWI).

The protein belongs to the CemA family.

The protein localises to the plastid. It is found in the chloroplast inner membrane. The enzyme catalyses K(+)(in) + H(+)(out) = K(+)(out) + H(+)(in). In terms of biological role, contributes to K(+)/H(+) antiport activity by supporting proton efflux to control proton extrusion and homeostasis in chloroplasts in a light-dependent manner to modulate photosynthesis. Prevents excessive induction of non-photochemical quenching (NPQ) under continuous-light conditions. Indirectly promotes efficient inorganic carbon uptake into chloroplasts. The chain is Potassium/proton antiporter CemA from Helianthus annuus (Common sunflower).